A 652-amino-acid polypeptide reads, in one-letter code: Acetyl-coenzyme A synthetase (652 aa).

CoA-binding positions include 189-192 (RGGK) and Thr-311. ATP-binding positions include 387–389 (GEP), 411–416 (DTWWQT), Asp-500, and Arg-515. Ser-523 lines the CoA pocket. An ATP-binding site is contributed by Arg-526. Mg(2+) contacts are provided by Val-537, His-539, and Val-542. A CoA-binding site is contributed by Arg-584. Residue Lys-609 is modified to N6-acetyllysine.

It belongs to the ATP-dependent AMP-binding enzyme family. Requires Mg(2+) as cofactor. Post-translationally, acetylated. Deacetylation by the SIR2-homolog deacetylase activates the enzyme.

The catalysed reaction is acetate + ATP + CoA = acetyl-CoA + AMP + diphosphate. In terms of biological role, catalyzes the conversion of acetate into acetyl-CoA (AcCoA), an essential intermediate at the junction of anabolic and catabolic pathways. AcsA undergoes a two-step reaction. In the first half reaction, AcsA combines acetate with ATP to form acetyl-adenylate (AcAMP) intermediate. In the second half reaction, it can then transfer the acetyl group from AcAMP to the sulfhydryl group of CoA, forming the product AcCoA. In Rhizobium rhizogenes (Agrobacterium rhizogenes), this protein is Acetyl-coenzyme A synthetase.